The sequence spans 701 residues: Epithelial splicing regulatory protein 2 (701 aa).

RRM domains are found at residues 226 to 303, 327 to 407, and 448 to 523; these read TVIR…KATG, VIIR…RSTA, and CVRL…VEVF.

It belongs to the ESRP family.

It is found in the nucleus. MRNA splicing factor that regulates the formation of epithelial cell-specific isoforms. Specifically regulates the expression of FGFR2-IIIb, an epithelial cell-specific isoform of FGFR2. Acts by directly binding specific sequences in mRNAs. Binds the GU-rich sequence motifs in the ISE/ISS-3, a cis-element regulatory region present in the mRNA of FGFR2. The sequence is that of Epithelial splicing regulatory protein 2 (ESRP2) from Gallus gallus (Chicken).